A 460-amino-acid polypeptide reads, in one-letter code: GTPase Der (460 aa).

EngA-type G domains lie at 2–166 and 175–353; these read KTIA…AEER and TRIA…QERK. GTP-binding positions include 8-15, 55-59, 118-121, 181-188, 228-232, and 293-296; these read GRPNVGKS, DTGGL, NKLD, GQPNAGKS, DTAGL, and NKID. Positions 354–446 constitute a KH-like domain; that stretch reads KRIPTHRLTQ…LLWKWRKAEG (93 aa).

The protein belongs to the TRAFAC class TrmE-Era-EngA-EngB-Septin-like GTPase superfamily. EngA (Der) GTPase family. In terms of assembly, associates with the 50S ribosomal subunit.

In terms of biological role, GTPase that plays an essential role in the late steps of ribosome biogenesis. This is GTPase Der from Methylacidiphilum infernorum (isolate V4) (Methylokorus infernorum (strain V4)).